The chain runs to 353 residues: Nif-specific regulatory protein (353 aa).

The Sigma-54 factor interaction domain occupies 12 to 240 (IVGESAALKE…LQNCTQRTAT (229 aa)). ATP is bound by residues 40–47 (GESGTGKE) and 103–112 (AHGGTLLLDE). Residues 325–344 (QAKAARLLGRTPRQVGYSLR) constitute a DNA-binding region (H-T-H motif).

Interacts with sigma-54.

Functionally, required for activation of most nif operons, which are directly involved in nitrogen fixation. This Rhizobium leguminosarum bv. trifolii protein is Nif-specific regulatory protein (nifA).